The primary structure comprises 360 residues: Phospho-N-acetylmuramoyl-pentapeptide-transferase (360 aa).

10 helical membrane-spanning segments follow: residues 21-41 (YLTF…LWIG), 71-91 (TPTM…ILWA), 94-114 (SNPY…IGFI), 142-162 (LVVA…VLVV), 168-188 (IMPQ…VGAS), 199-219 (GLAI…AWAT), 236-256 (ASEL…FLWF), 263-283 (VFMG…IAVL), 288-308 (FLLF…ILQV), and 338-358 (VIVR…VTLK).

The protein belongs to the glycosyltransferase 4 family. MraY subfamily. Mg(2+) is required as a cofactor.

It localises to the cell inner membrane. The enzyme catalyses UDP-N-acetyl-alpha-D-muramoyl-L-alanyl-gamma-D-glutamyl-meso-2,6-diaminopimeloyl-D-alanyl-D-alanine + di-trans,octa-cis-undecaprenyl phosphate = di-trans,octa-cis-undecaprenyl diphospho-N-acetyl-alpha-D-muramoyl-L-alanyl-D-glutamyl-meso-2,6-diaminopimeloyl-D-alanyl-D-alanine + UMP. It participates in cell wall biogenesis; peptidoglycan biosynthesis. In terms of biological role, catalyzes the initial step of the lipid cycle reactions in the biosynthesis of the cell wall peptidoglycan: transfers peptidoglycan precursor phospho-MurNAc-pentapeptide from UDP-MurNAc-pentapeptide onto the lipid carrier undecaprenyl phosphate, yielding undecaprenyl-pyrophosphoryl-MurNAc-pentapeptide, known as lipid I. The chain is Phospho-N-acetylmuramoyl-pentapeptide-transferase from Tolumonas auensis (strain DSM 9187 / NBRC 110442 / TA 4).